Here is a 311-residue protein sequence, read N- to C-terminus: Interleukin-20 receptor subunit beta (311 aa).

The signal sequence occupies residues 1–29 (MQTFTMVLEEIWTSLFMWFFYALIPCLLT). The Extracellular segment spans residues 30 to 233 (DEVAILPAPQ…VEVQGEAIPL (204 aa)). Fibronectin type-III domains lie at 37-136 (APQN…RNST) and 144-228 (EITK…EVQG). A glycan (N-linked (GlcNAc...) asparagine) is linked at Asn-40. A disulfide bond links Cys-89 and Cys-97. N-linked (GlcNAc...) asparagine glycosylation occurs at Asn-134. Cys-202 and Cys-223 are joined by a disulfide. The chain crosses the membrane as a helical span at residues 234-254 (VLALFAFVGFMLILVVVPLFV). The Cytoplasmic segment spans residues 255 to 311 (WKMGRLLQYSCCPVVVLPDTLKITNSPQKLISCRREEVDACATAVMSPEELLRAWIS).

It belongs to the type II cytokine receptor family. Heterodimer with IL20RA and heterodimer with IL22RA1. Widely expressed with highest levels in skin and testis. Highly expressed in psoriatic skin.

Its subcellular location is the membrane. Functionally, the IL20RA/IL20RB dimer is a receptor for IL19, IL20 and IL24. The IL22RA1/IL20RB dimer is a receptor for IL20 and IL24. The polypeptide is Interleukin-20 receptor subunit beta (IL20RB) (Homo sapiens (Human)).